We begin with the raw amino-acid sequence, 257 residues long: Imidazole glycerol phosphate synthase subunit HisF (257 aa).

Residues Asp11 and Asp130 contribute to the active site.

Belongs to the HisA/HisF family. As to quaternary structure, heterodimer of HisH and HisF.

It localises to the cytoplasm. It catalyses the reaction 5-[(5-phospho-1-deoxy-D-ribulos-1-ylimino)methylamino]-1-(5-phospho-beta-D-ribosyl)imidazole-4-carboxamide + L-glutamine = D-erythro-1-(imidazol-4-yl)glycerol 3-phosphate + 5-amino-1-(5-phospho-beta-D-ribosyl)imidazole-4-carboxamide + L-glutamate + H(+). It functions in the pathway amino-acid biosynthesis; L-histidine biosynthesis; L-histidine from 5-phospho-alpha-D-ribose 1-diphosphate: step 5/9. Functionally, IGPS catalyzes the conversion of PRFAR and glutamine to IGP, AICAR and glutamate. The HisF subunit catalyzes the cyclization activity that produces IGP and AICAR from PRFAR using the ammonia provided by the HisH subunit. The chain is Imidazole glycerol phosphate synthase subunit HisF from Aliivibrio fischeri (strain ATCC 700601 / ES114) (Vibrio fischeri).